Here is a 29-residue protein sequence, read N- to C-terminus: U-limacoditoxin(12)-Dv72 (29 aa).

Positions M1 to C15 are cleaved as a signal peptide. N27 is subject to Asparagine amide.

The protein belongs to the limacoditoxin-12 family. As to expression, expressed by the venom secretory cell of the spine. The spine is a cuticular structure containing a single large nucleated venom-secreting cell at its base. It is an independent unit capable of producing, storing and injecting venom. On the back of D.vulnerans caterpillars, spines are grouped together by 50 to 100 to form scoli, of which there are eight in D.vulnerans.

The protein resides in the secreted. Its function is as follows. Probable toxin. Does not show insecticidal, antimicrobial and antiparasitic activities. Does not induce increase in intracellular calcium in mouse DRG neurons, suggesting that it does not induce pain. This chain is U-limacoditoxin(12)-Dv72, found in Doratifera vulnerans (Mottled cup moth).